The following is a 317-amino-acid chain: Protoheme IX farnesyltransferase (317 aa).

Transmembrane regions (helical) follow at residues 28–48 (IIPLLLITTAASMWIASHGHI), 53–73 (LLITLLGGTLAAASAQTLNCI), 101–121 (LIFALILGSLSFSLLMVFVNL), 122–142 (LSACLALSGIVFYMLVYTHWL), 150–170 (IVIGGAAGSIPPLVGWAAVTG), 178–198 (ILFALIFLWTPPHFWALALMI), 223–243 (IWIYTLIVVPFSLLLVFPFQA), 246–266 (LFYAIAALVLGAIFIQKAWEL), and 282–302 (YSILYMMLLCTAMVVDSLPAV).

It belongs to the UbiA prenyltransferase family. Protoheme IX farnesyltransferase subfamily.

Its subcellular location is the cell inner membrane. The enzyme catalyses heme b + (2E,6E)-farnesyl diphosphate + H2O = Fe(II)-heme o + diphosphate. Its pathway is porphyrin-containing compound metabolism; heme O biosynthesis; heme O from protoheme: step 1/1. In terms of biological role, converts heme B (protoheme IX) to heme O by substitution of the vinyl group on carbon 2 of heme B porphyrin ring with a hydroxyethyl farnesyl side group. This chain is Protoheme IX farnesyltransferase, found in Picosynechococcus sp. (strain ATCC 27264 / PCC 7002 / PR-6) (Agmenellum quadruplicatum).